Consider the following 462-residue polypeptide: Phosphoglucosamine mutase (462 aa).

Catalysis depends on Ser111, which acts as the Phosphoserine intermediate. Mg(2+) is bound by residues Ser111, Asp250, Asp252, and Asp254. At Ser111 the chain carries Phosphoserine.

The protein belongs to the phosphohexose mutase family. The cofactor is Mg(2+). Activated by phosphorylation.

It carries out the reaction alpha-D-glucosamine 1-phosphate = D-glucosamine 6-phosphate. Functionally, catalyzes the conversion of glucosamine-6-phosphate to glucosamine-1-phosphate. The protein is Phosphoglucosamine mutase of Synechococcus sp. (strain WH7803).